We begin with the raw amino-acid sequence, 122 residues long: UPF0102 protein XCV0816 (122 aa).

It belongs to the UPF0102 family.

The chain is UPF0102 protein XCV0816 from Xanthomonas euvesicatoria pv. vesicatoria (strain 85-10) (Xanthomonas campestris pv. vesicatoria).